Reading from the N-terminus, the 872-residue chain is Alanine--tRNA ligase (872 aa).

The Zn(2+) site is built by His567, His571, Cys669, and His673.

The protein belongs to the class-II aminoacyl-tRNA synthetase family. Requires Zn(2+) as cofactor.

The protein localises to the cytoplasm. It carries out the reaction tRNA(Ala) + L-alanine + ATP = L-alanyl-tRNA(Ala) + AMP + diphosphate. Its function is as follows. Catalyzes the attachment of alanine to tRNA(Ala) in a two-step reaction: alanine is first activated by ATP to form Ala-AMP and then transferred to the acceptor end of tRNA(Ala). Also edits incorrectly charged Ser-tRNA(Ala) and Gly-tRNA(Ala) via its editing domain. The protein is Alanine--tRNA ligase of Streptococcus pyogenes serotype M1.